The sequence spans 184 residues: Peptide deformylase (184 aa).

Residues Cys-98 and His-140 each coordinate Fe cation. Glu-141 is an active-site residue. Residue His-144 participates in Fe cation binding.

Belongs to the polypeptide deformylase family. Requires Fe(2+) as cofactor.

The enzyme catalyses N-terminal N-formyl-L-methionyl-[peptide] + H2O = N-terminal L-methionyl-[peptide] + formate. Removes the formyl group from the N-terminal Met of newly synthesized proteins. Requires at least a dipeptide for an efficient rate of reaction. N-terminal L-methionine is a prerequisite for activity but the enzyme has broad specificity at other positions. The polypeptide is Peptide deformylase (Bacteroides fragilis (strain ATCC 25285 / DSM 2151 / CCUG 4856 / JCM 11019 / LMG 10263 / NCTC 9343 / Onslow / VPI 2553 / EN-2)).